The following is a 436-amino-acid chain: UDP-N-acetylmuramate--L-alanine ligase (436 aa).

108-114 (GAHGKTS) is an ATP binding site.

It belongs to the MurCDEF family.

It is found in the cytoplasm. It carries out the reaction UDP-N-acetyl-alpha-D-muramate + L-alanine + ATP = UDP-N-acetyl-alpha-D-muramoyl-L-alanine + ADP + phosphate + H(+). It functions in the pathway cell wall biogenesis; peptidoglycan biosynthesis. In terms of biological role, cell wall formation. The polypeptide is UDP-N-acetylmuramate--L-alanine ligase (Bacillus cereus (strain AH187)).